A 393-amino-acid polypeptide reads, in one-letter code: MEHFHQIQQTIQHYQQQLAAQQQQQVQQQQLQQHQVVVQQNQQQAHQNSSNTTAGVGTQQLFTYKMASSFPNPATTMAQVVATSNAAGTTGYDYRLNMAQAAAAAAVPGSQWWYSAANQGQVDANTAAQLQHQQQQQQQQQQQQQQQHQQQQQMQQQQQQQNVINSASPMSRVKADAKPRGRMTAYAYFVQTCREEHKKKHPDETVIFAEFSRKCAERWKTMVDKEKKRFHEMAEKDKQRYEAEMQNYVPPKGAVVGRGKKRKQIKDPNAPKRSLSAFFWFCNDERNKVKALNPEFGVGDIAKELGRKWSDVDPEVKQKYESMAERDKARYEREMTEYKTSGKIAMSAPSMQASMQAQAQKAALLAAAAQQQHQQLEEQHDDDDGDGDDDENQ.

The disordered stretch occupies residues 153–179 (QMQQQQQQQNVINSASPMSRVKADAKP). 2 DNA-binding regions (HMG box) span residues 179 to 249 (PRGR…QNYV) and 271 to 339 (PKRS…TEYK). Residues 364–374 (LLAAAAQQQHQ) show a composition bias toward low complexity. Residues 364–393 (LLAAAAQQQHQQLEEQHDDDDGDGDDDENQ) form a disordered region. A compositionally biased stretch (acidic residues) spans 379–393 (QHDDDDGDGDDDENQ).

The protein belongs to the HMGB family.

The protein resides in the nucleus. The protein localises to the chromosome. Functionally, binds preferentially single-stranded DNA and unwinds double-stranded DNA. This chain is High mobility group protein DSP1 (Dsp1), found in Drosophila melanogaster (Fruit fly).